Here is a 575-residue protein sequence, read N- to C-terminus: Flagellin A (575 aa).

Repeat copies occupy residues 405 to 409 (GSGFS), 411 to 415 (GSGFS), and 447 to 450 (GSGF).

The protein belongs to the bacterial flagellin family. Heteromer of flaA and flaB.

The protein resides in the secreted. Its subcellular location is the bacterial flagellum. Functionally, flagellin is the subunit protein which polymerizes to form the filaments of bacterial flagella. The chain is Flagellin A (flaA) from Campylobacter jejuni.